We begin with the raw amino-acid sequence, 374 residues long: Speckle-type POZ protein B (374 aa).

In terms of domain architecture, MATH spans 31–161 (KFSYMWTINN…DDKLTLFCEV (131 aa)). A required for nuclear localization region spans residues 71-191 (VNPKGLDEES…PECRLSDELG (121 aa)). The BTB domain occupies 173-297 (QNTMNMVKVP…MCEEALCSNL (125 aa)). Residues 297–355 (LSVENAAEILILADLHSADQLKTQAVDFINYHASDVMETSGWKSMVVSHPHLVAEAYRS) form a homodimerization region.

Belongs to the Tdpoz family. As to quaternary structure, homodimer. Part of cullin-RING-based BCR (BTB-CUL3-RBX1) E3 ubiquitin-protein ligase complexes that contain CUL3 and SPOP, plus a target protein.

It is found in the nucleus. The protein resides in the nucleus speckle. It functions in the pathway protein modification; protein ubiquitination. Component of a cullin-RING-based BCR (BTB-CUL3-RBX1) E3 ubiquitin-protein ligase complex that mediates the ubiquitination of target proteins, leading most often to their proteasomal degradation. This Xenopus laevis (African clawed frog) protein is Speckle-type POZ protein B (spop-b).